A 154-amino-acid polypeptide reads, in one-letter code: MVNLSDNPQALDINQIINILPHRYPFLLVDRVLEIDVEKGYILAQKNVTINESFFQGHFPNAPIMPGVLILEALAQAGGILVHLRGPGDKIAILLNVNHAKFRQPVKPGDVLHLKGEGLHFSSKGGRIKAEALVNQKIAAEAEIGFVFVDKSQI.

Histidine 58 is an active-site residue.

The protein belongs to the thioester dehydratase family. FabZ subfamily.

The protein localises to the cytoplasm. The enzyme catalyses a (3R)-hydroxyacyl-[ACP] = a (2E)-enoyl-[ACP] + H2O. Involved in unsaturated fatty acids biosynthesis. Catalyzes the dehydration of short chain beta-hydroxyacyl-ACPs and long chain saturated and unsaturated beta-hydroxyacyl-ACPs. This is 3-hydroxyacyl-[acyl-carrier-protein] dehydratase FabZ from Protochlamydia amoebophila (strain UWE25).